Reading from the N-terminus, the 180-residue chain is Free methionine-R-sulfoxide reductase (180 aa).

One can recognise a GAF domain in the interval 99–177 (GVCGTAASTK…KLAKLINKSC (79 aa)).

Belongs to the free Met sulfoxide reductase family.

It is found in the cytoplasm. The protein localises to the nucleus. The catalysed reaction is [thioredoxin]-disulfide + L-methionine + H2O = L-methionine (R)-S-oxide + [thioredoxin]-dithiol. In terms of biological role, catalyzes the reversible oxidation-reduction of the R-enantiomer of free methionine sulfoxide to methionine. Does not act on S-enantiomer of free methionine sulfoxide or R-enantiomer of dabsylated methionine sulfoxide. Involved in protection against oxidative stress. This is Free methionine-R-sulfoxide reductase from Saccharomyces cerevisiae (strain ATCC 204508 / S288c) (Baker's yeast).